Consider the following 114-residue polypeptide: Large ribosomal subunit protein uL22 (114 aa).

This sequence belongs to the universal ribosomal protein uL22 family. As to quaternary structure, part of the 50S ribosomal subunit.

Functionally, this protein binds specifically to 23S rRNA; its binding is stimulated by other ribosomal proteins, e.g. L4, L17, and L20. It is important during the early stages of 50S assembly. It makes multiple contacts with different domains of the 23S rRNA in the assembled 50S subunit and ribosome. In terms of biological role, the globular domain of the protein is located near the polypeptide exit tunnel on the outside of the subunit, while an extended beta-hairpin is found that lines the wall of the exit tunnel in the center of the 70S ribosome. This is Large ribosomal subunit protein uL22 from Ehrlichia ruminantium (strain Gardel).